A 582-amino-acid chain; its full sequence is Cryptochrome DASH, chloroplastic/mitochondrial (582 aa).

The N-terminal 49 residues, 1–49 (MLHFLSSSSPLNPQFLLLPRQSARLRVLLSIPVSAMSSSSSSSSRGALA), are a transit peptide targeting the chloroplast and mitochondrion. The Photolyase/cryptochrome alpha/beta domain maps to 84–234 (GVAIVWFRND…KLQLIWGATL (151 aa)). Positions 560–582 (GHQKRDQQFNRQRRPGHMYRRQK) are disordered. Residues 570-582 (RQRRPGHMYRRQK) show a composition bias toward basic residues.

It belongs to the DNA photolyase class-1 family. FAD is required as a cofactor. It depends on (6R)-5,10-methylene-5,6,7,8-tetrahydrofolate as a cofactor.

The protein resides in the plastid. The protein localises to the chloroplast. It localises to the mitochondrion. Its function is as follows. May have a photoreceptor function. Binds ss- and ds-DNA in a sequence non-specific manner, lacks photolyase activity. The polypeptide is Cryptochrome DASH, chloroplastic/mitochondrial (CRYD) (Oryza sativa subsp. japonica (Rice)).